The following is an 84-amino-acid chain: Large ribosomal subunit protein bL27 (84 aa).

The segment at 1–20 (MAHKKAGGSTRNGRDSNPKY) is disordered.

Belongs to the bacterial ribosomal protein bL27 family.

In Francisella philomiragia subsp. philomiragia (strain ATCC 25017 / CCUG 19701 / FSC 153 / O#319-036), this protein is Large ribosomal subunit protein bL27.